The sequence spans 119 residues: MHELSLAGGILQLLEDAARRERFARVTLLRLEAGKLCGVEVRALRFALEAIASGTCLEGACIEIEEPEGQAWCLQCNAAVALAERGAPCSGCGGYRLQPTAGTELRVMDMLVEDHWCPE.

Histidine 2 serves as a coordination point for Ni(2+). Residues cysteine 73, cysteine 76, cysteine 89, and cysteine 92 each contribute to the Zn(2+) site.

It belongs to the HypA/HybF family.

In terms of biological role, involved in the maturation of [NiFe] hydrogenases. Required for nickel insertion into the metal center of the hydrogenase. This chain is Hydrogenase maturation factor HypA, found in Cupriavidus necator (strain ATCC 17699 / DSM 428 / KCTC 22496 / NCIMB 10442 / H16 / Stanier 337) (Ralstonia eutropha).